A 119-amino-acid polypeptide reads, in one-letter code: RKLAFRYRRVREIYDKYKTNVGGLLSPQKREALQRLRTDIEVLTDSWLETALKSLLLIQSRKNCVNILITTTQLVPALAKVLLYGLGEVFPIENIYSATKIGKESCFERIVSRFGKKVT.

The protein belongs to the HAD-like hydrolase superfamily. EYA family. Mg(2+) serves as cofactor.

Its subcellular location is the cytoplasm. It localises to the nucleus. It catalyses the reaction O-phospho-L-tyrosyl-[protein] + H2O = L-tyrosyl-[protein] + phosphate. Its function is as follows. Tyrosine phosphatase that specifically dephosphorylates 'Tyr-142' of histone H2AX (H2AXY142ph). 'Tyr-142' phosphorylation of histone H2AX plays a central role in DNA repair and acts as a mark that distinguishes between apoptotic and repair responses to genotoxic stress. Promotes efficient DNA repair by dephosphorylating H2AX, promoting the recruitment of DNA repair complexes containing MDC1. Its function as histone phosphatase probably explains its role in transcription regulation during organogenesis. May be involved in development of the eye. This is Protein phosphatase EYA3 (EYA3) from Gallus gallus (Chicken).